Reading from the N-terminus, the 140-residue chain is MAREFSRTRRIAQQLQQELAQVLQRDIKDPRIGMVTVNDVEVSRDLSYAKVFVTFFEEDSKLVEEKLEALTTASGYVRSLVAGRMKLRVMPELRFVYDASLVEGMRMSNLVTRIIHDDEAKQQKHNGKDKTDTADSEGEE.

The segment covering aspartate 118–threonine 133 has biased composition (basic and acidic residues). The disordered stretch occupies residues aspartate 118–glutamate 140.

This sequence belongs to the RbfA family. Monomer. Binds 30S ribosomal subunits, but not 50S ribosomal subunits or 70S ribosomes.

The protein localises to the cytoplasm. In terms of biological role, one of several proteins that assist in the late maturation steps of the functional core of the 30S ribosomal subunit. Associates with free 30S ribosomal subunits (but not with 30S subunits that are part of 70S ribosomes or polysomes). Required for efficient processing of 16S rRNA. May interact with the 5'-terminal helix region of 16S rRNA. This chain is Ribosome-binding factor A, found in Shewanella woodyi (strain ATCC 51908 / MS32).